A 513-amino-acid chain; its full sequence is tRNA-2-methylthio-N(6)-dimethylallyladenosine synthase (513 aa).

The region spanning 67 to 185 is the MTTase N-terminal domain; sequence KTFLIKTYGC…LPEILEEAYL (119 aa). C76, C112, C146, C222, C226, and C229 together coordinate [4Fe-4S] cluster. The region spanning 208-438 is the Radical SAM core domain; sequence REGNIKAWVN…NKKVACYSER (231 aa). A TRAM domain is found at 441-504; the sequence is QQYEGQTVQV…QFSLNGTFIS (64 aa).

It belongs to the methylthiotransferase family. MiaB subfamily. As to quaternary structure, monomer. [4Fe-4S] cluster is required as a cofactor.

The protein resides in the cytoplasm. The catalysed reaction is N(6)-dimethylallyladenosine(37) in tRNA + (sulfur carrier)-SH + AH2 + 2 S-adenosyl-L-methionine = 2-methylsulfanyl-N(6)-dimethylallyladenosine(37) in tRNA + (sulfur carrier)-H + 5'-deoxyadenosine + L-methionine + A + S-adenosyl-L-homocysteine + 2 H(+). Catalyzes the methylthiolation of N6-(dimethylallyl)adenosine (i(6)A), leading to the formation of 2-methylthio-N6-(dimethylallyl)adenosine (ms(2)i(6)A) at position 37 in tRNAs that read codons beginning with uridine. This is tRNA-2-methylthio-N(6)-dimethylallyladenosine synthase from Staphylococcus saprophyticus subsp. saprophyticus (strain ATCC 15305 / DSM 20229 / NCIMB 8711 / NCTC 7292 / S-41).